We begin with the raw amino-acid sequence, 1548 residues long: MVDNGHVTIAMADLGTVVEIAQVRCQQEAQRKFAEQLDELWGGEPAYTPTVEDQASWFQQLYYGWIGDYIYKAAAGNITEADLPPPTRSTRTYHIGRKLSRQAHADIDASRRWQGYIGCEVVYKSEAEAKGVLRWVGHLQQSDYPRSLVAGVEWRMPPRHRRLAVLGSAAALHNGVVHGERLFWPHEDNYLCSCEPVEQLYVKSKYNLIPPRPPPSPDLLRTLFKVHWYHVWAQILPKLLSDVTALMLPVLLEYFVKYLNADNATWGWGLGLALTIFLTNVIQSCSAHKYDHISIRTAALFETSSMALLFEKCFTVSRRSLQRPDMSVGRIMNMVGNDVDNIGSLNWYVMYFWSAPLQLVLCLLLLIRLVGWLRVPGMAVLFVTLPLQAVISKHVQDVSERMASVVDLRIKRTNELLSGVRIVKFMGWEPVFLARIQDARSRELRCLRDVHVANVFFMFVNDATPTLVIAVVFILYHVSGKVLKPEVVFPTIALLNTMRVSFFMIPIIISSILQCFVSAKRVTAFIECPDTHSQVQDIASIDVPDAAAIFKGASIHTYLPVKLPRCKSRLTAMQRSTLWFRRRGVPETEWYEVDSPDASASSLAVHSTTVHMGSTQTVITDSDGAAGEDEKGEVEEGDREYYQLVSKELLRNVSLTIPKGKLTMVIGSTGSGKSTLLGALMGEYSVESGELWAERSIAYVPQQAWIMNATLRGNILFFDEERAEDLQDVIRCCQLEADLAQFCGGLDTEIGEMGVNLSGGQKARVSLARAVYANRDVYLLDDPLSALDAHVGQRIVQDVILGRLRGKTRVLATHQIHLLPLADYIVVLQHGSIVFAGDFAAFSATALEETLRGELKGSKDVESCSSDVDTESATAETAPYVAKAKGLNAEQETSLAGGEDPLRSDVEAGRLMTTEEKATGKVPWSTYVAYLKSCGGLEAWGCLLATFALTECVTAASSVWLSIWSTGSLMWSADTYLYVYLFIVFLEIFGSPLRFFLCYYLIRIGSRNMHRDLLESIGVARMSFFDTTPVGRVLNRFTKDMSILDNTLNDGYLYLLEYFFSMCSTVIIMVVVQPFVLVAIVPCVYSYYKLMQVYNASNRETRRIKSIAHSPVFTLLEESLQGQRTIATYGKLHLVLQEALGRLDVVYSALYMQNVSNRWLGVRLEFLSCVVTFMVAFIGVIGKMEGASSQNIGLISLSLTMSMTLTETLNWLVRQVAMVEANMNSVERVLHYTQEVEHEHVPEMGELVAQLVRSESGRGANVTETVVIESAGAASSALHPVQAGSLVLEGVQMRYREGLPLVLRGVSFQIAPREKVGIVGRTGSGKSTLLLTFMRMVEVCGGVIHVNGREMSAYGLRDVRRHFSMIPQDPVLFDGTVRQNVDPFLEASSAEVWAALELVGLRERVASESEGIDSRVLEGGSNYSVGQRQLMCMARALLKRGSGFILMDEATANIDPALDRQIQATVMSAFSAYTVITIAHRLHTVAQYDKIIVMDHGVVAEMGSPRELVMNHQSMFHSMVESLGSRGSKDFYELLMGRRIVQPAVLSD.

Over 1-238 (MVDNGHVTIA…YHVWAQILPK (238 aa)) the chain is Cytoplasmic. Residues 231-514 (VWAQILPKLL…IPIIISSILQ (284 aa)) form the ABC transmembrane type-1 1 domain. Residues 239–256 (LLSDVTALMLPVLLEYFV) traverse the membrane as a helical segment. A glycan (N-linked (GlcNAc...) asparagine) is linked at Asn263. Helical transmembrane passes span 266–287 (WGWG…SCSA), 349–367 (VMYF…LLLI), 375–392 (VPGM…AVIS), 463–480 (ATPT…HVSG), and 500–519 (VSFF…FVSA). At 520 to 932 (KRVTAFIECP…PWSTYVAYLK (413 aa)) the chain is on the cytoplasmic side. The ABC transporter 1 domain maps to 634–855 (VEEGDREYYQ…ALEETLRGEL (222 aa)). Residue 667-674 (GSTGSGKS) participates in ATP binding. 4 helical membrane passes run 933–950 (SCGG…FALT), 975–993 (TYLY…GSPL), 1051–1070 (GYLY…IIMV), and 1072–1088 (VQPF…YSYY). Positions 940–1221 (WGCLLATFAL…LVRQVAMVEA (282 aa)) constitute an ABC transmembrane type-1 2 domain. N-linked (GlcNAc...) asparagine glycans are attached at residues Asn1095 and Asn1154. A run of 2 helical transmembrane segments spans residues 1164–1182 (LEFL…GVIG) and 1186–1205 (GASS…SMTL). The Cytoplasmic portion of the chain corresponds to 1206 to 1548 (TETLNWLVRQ…RIVQPAVLSD (343 aa)). Residues 1286–1521 (LVLEGVQMRY…HQSMFHSMVE (236 aa)) form the ABC transporter 2 domain. 1320–1327 (GRTGSGKS) is a binding site for ATP.

Belongs to the ABC transporter superfamily. ABCB family. Multidrug resistance exporter (TC 3.A.1.201) subfamily.

It localises to the membrane. The catalysed reaction is ATP + H2O + xenobioticSide 1 = ADP + phosphate + xenobioticSide 2.. The sequence is that of Multidrug resistance protein (PGPA) from Leishmania tarentolae (Sauroleishmania tarentolae).